A 424-amino-acid chain; its full sequence is Histidine--tRNA ligase (424 aa).

The protein belongs to the class-II aminoacyl-tRNA synthetase family. Homodimer.

It is found in the cytoplasm. The enzyme catalyses tRNA(His) + L-histidine + ATP = L-histidyl-tRNA(His) + AMP + diphosphate + H(+). In Salmonella typhi, this protein is Histidine--tRNA ligase.